A 618-amino-acid polypeptide reads, in one-letter code: UvrABC system protein C (618 aa).

The region spanning 20–98 is the GIY-YIG domain; that stretch reads TAPGVYRMYA…IKSLSPRYNV (79 aa). Residues 207-242 form the UVR domain; the sequence is DQLGEEIMHSMQQASEALEFERAARLRDLLSSLRSM.

Belongs to the UvrC family. In terms of assembly, interacts with UvrB in an incision complex.

The protein localises to the cytoplasm. Its function is as follows. The UvrABC repair system catalyzes the recognition and processing of DNA lesions. UvrC both incises the 5' and 3' sides of the lesion. The N-terminal half is responsible for the 3' incision and the C-terminal half is responsible for the 5' incision. This is UvrABC system protein C from Xanthomonas campestris pv. campestris (strain B100).